The following is a 94-amino-acid chain: ESAT-6-like protein EsxL (94 aa).

The protein belongs to the WXG100 family. ESAT-6 subfamily. In terms of assembly, strongly interacts with EsxK to form a heterodimeric complex under reducing conditions.

It localises to the secreted. The chain is ESAT-6-like protein EsxL from Mycobacterium bovis (strain ATCC BAA-935 / AF2122/97).